A 137-amino-acid chain; its full sequence is Large-conductance mechanosensitive channel (137 aa).

Transmembrane regions (helical) follow at residues 10-30 (FAMRGNVVDLAVGVIIGAAFG) and 76-96 (GVFIQNVFDFLIVAFAIFMAI).

This sequence belongs to the MscL family. As to quaternary structure, homopentamer.

The protein resides in the cell inner membrane. Functionally, channel that opens in response to stretch forces in the membrane lipid bilayer. May participate in the regulation of osmotic pressure changes within the cell. The polypeptide is Large-conductance mechanosensitive channel (Escherichia coli O45:K1 (strain S88 / ExPEC)).